The chain runs to 239 residues: Phosphoribosylaminoimidazole-succinocarboxamide synthase (239 aa).

The protein belongs to the SAICAR synthetase family.

The enzyme catalyses 5-amino-1-(5-phospho-D-ribosyl)imidazole-4-carboxylate + L-aspartate + ATP = (2S)-2-[5-amino-1-(5-phospho-beta-D-ribosyl)imidazole-4-carboxamido]succinate + ADP + phosphate + 2 H(+). Its pathway is purine metabolism; IMP biosynthesis via de novo pathway; 5-amino-1-(5-phospho-D-ribosyl)imidazole-4-carboxamide from 5-amino-1-(5-phospho-D-ribosyl)imidazole-4-carboxylate: step 1/2. This chain is Phosphoribosylaminoimidazole-succinocarboxamide synthase, found in Acinetobacter baumannii (strain AB307-0294).